The following is a 1928-amino-acid chain: Myosin-1 (1928 aa).

The region spanning 8–71 is the Myosin N-terminal SH3-like domain; sequence SSNMIVWIPD…RISDVFPVNP (64 aa). The Myosin motor domain occupies 75–791; that stretch reads DKVENMSELT…VLADLEKQKD (717 aa). Residue 180–187 participates in ATP binding; sequence GESGAGKT. An actin-binding region spans residues 460–529; the sequence is IGLLDIAGFE…LQLTIDLIES (70 aa). Residues 629 to 641 are compositionally biased toward polar residues; sequence SSSAGVEANISNQ. A disordered region spans residues 629 to 657; it reads SSSAGVEANISNQEVKKSARTSTFKTTSS. An IQ domain is found at 794 to 823; sequence LNNIMIKLTATIRGYTVRKEITYHLQKLKK. Residues 856-1911 adopt a coiled-coil conformation; sequence SSNDMTRTKK…FWKSRYESTM (1056 aa).

The protein belongs to the TRAFAC class myosin-kinesin ATPase superfamily. Myosin family.

Functionally, required for cell division. This is Myosin-1 (MYO1) from Saccharomyces cerevisiae (strain ATCC 204508 / S288c) (Baker's yeast).